We begin with the raw amino-acid sequence, 270 residues long: Flavin-dependent thymidylate synthase (270 aa).

The region spanning 13–218 is the ThyX domain; it reads GFVRLVDQMG…PLAWAAFEEH (206 aa). Residues Ser59, 82–84, and Glu90 each bind FAD; that span reads RHR. DUMP contacts are provided by residues 79-82, 90-94, and Arg157; these read QWFR and EISGR. Positions 82 to 92 match the ThyX motif motif; it reads RHRTASVNEIS. Residues 173-175 and His179 contribute to the FAD site; that span reads DLH. Arg184 serves as a coordination point for dUMP. Arg184 acts as the Involved in ionization of N3 of dUMP, leading to its activation in catalysis.

The protein belongs to the thymidylate synthase ThyX family. Homotetramer. It depends on FAD as a cofactor.

It catalyses the reaction dUMP + (6R)-5,10-methylene-5,6,7,8-tetrahydrofolate + NADPH + H(+) = dTMP + (6S)-5,6,7,8-tetrahydrofolate + NADP(+). Its pathway is pyrimidine metabolism; dTTP biosynthesis. In terms of biological role, catalyzes the reductive methylation of 2'-deoxyuridine-5'-monophosphate (dUMP) to 2'-deoxythymidine-5'-monophosphate (dTMP) while utilizing 5,10-methylenetetrahydrofolate (mTHF) as the methyl donor, and NADPH and FADH(2) as the reductant. This Thermus thermophilus (strain ATCC 27634 / DSM 579 / HB8) protein is Flavin-dependent thymidylate synthase.